The sequence spans 153 residues: MSEENPCPRNIFLLCKEYGLELEDLRLLCVWCKRPLSEADIWAFAIKELFVVWRKGFPFGACGKCLIAAGKLRQYRHWHYSCYGDTVETETGIPIPQLFMRCYICHKPLSWEEKEALLVGNKRFHNISGRWTGHCMNCGSSCTATDPASRTLH.

2 zinc fingers span residues 29 to 65 (CVWC…CGKC) and 102 to 138 (CYIC…CMNC).

This sequence belongs to the papillomaviridae E6 protein family. As to quaternary structure, forms homodimers. Interacts with ubiquitin-protein ligase UBE3A/E6-AP; this interaction stimulates UBE3A ubiquitin activity. Interacts with host TP53 and EP300; this interaction inhibits TP53 activity.

The protein localises to the host cytoplasm. It is found in the host nucleus. Functionally, plays a major role in the induction and maintenance of cellular transformation. E6 associates with host UBE3A/E6-AP ubiquitin-protein ligase and modulates its activity. Sequesters tumor suppressor TP53 in the host cytoplasm and modulates its activity by interacting with host EP300 that results in the reduction of TP53 acetylation and activation. In turn, apoptosis induced by DNA damage is inhibited. E6 also protects host keratinocytes from apoptosis by mediating the degradation of host BAK1. May also inhibit host immune response. The polypeptide is Protein E6 (Human papillomavirus type 2a).